Reading from the N-terminus, the 340-residue chain is Protein RecA (340 aa).

An ATP-binding site is contributed by 66-73 (GPESSGKT).

It belongs to the RecA family.

It localises to the cytoplasm. Its function is as follows. Can catalyze the hydrolysis of ATP in the presence of single-stranded DNA, the ATP-dependent uptake of single-stranded DNA by duplex DNA, and the ATP-dependent hybridization of homologous single-stranded DNAs. It interacts with LexA causing its activation and leading to its autocatalytic cleavage. This chain is Protein RecA, found in Rickettsia prowazekii (strain Madrid E).